A 64-amino-acid chain; its full sequence is Alpha-conotoxin-like Ai1.2 (64 aa).

The first 17 residues, 1–17, serve as a signal peptide directing secretion; that stretch reads MFTVFLLVVLATTVVSS. A propeptide spanning residues 18–43 is cleaved from the precursor; it reads TSGRRAFRGRNAAAKASGLVGLTDRR. 2 cysteine pairs are disulfide-bonded: Cys46–Cys52 and Cys47–Cys60. Residues 48 to 50 are ser-Xaa-Pro motif, crucial for potent interaction with nAChR; it reads SDP. The residue at position 61 (Gly61) is a Glycine amide.

The protein belongs to the conotoxin A superfamily. As to expression, expressed by the venom duct.

It is found in the secreted. Alpha-conotoxins act on postsynaptic membranes, they bind to the nicotinic acetylcholine receptors (nAChR) and thus inhibit them. This chain is Alpha-conotoxin-like Ai1.2, found in Conus ammiralis (Admiral cone).